The primary structure comprises 332 residues: MLDVRGSLPGQVNTGTISPYRRIDRSNDTIGTSDLAADEQVLLGPFNHLDARPGKEIRSQLIDAFDSWLQVPTASLAVIKNVVRMLHNASLLIDDIQDNSELRRGAPAAHHAFGTAQTINSANYVYFRALRELSTLHNPVMVQIYTAELLNLHHGQGMDLFWRETGTCPTESRYLEMVGNKTGGLFRLAIRCMCVEGSPKQSSADYIRLATMIGILFQILDDFRNLTDGSYTSSKGFCEDLTEGKFSFPIVHAIRSNPGDSFLHDILRQHTDDPAVKKEAVSYLERCGSLIYTQGVIHQLAGDVLTLADEVDAGQGRAQALKDIVQRLMVKL.

Isopentenyl diphosphate contacts are provided by Lys55, Arg58, and His87. Positions 94 and 98 each coordinate Mg(2+). Residue Arg103 participates in dimethylallyl diphosphate binding. Residue Arg104 coordinates isopentenyl diphosphate. Residues Lys181, Thr182, and Gln218 each coordinate dimethylallyl diphosphate. Asp221 provides a ligand contact to Mg(2+). 3 residues coordinate dimethylallyl diphosphate: Asn225, Lys235, and Lys245.

It belongs to the FPP/GGPP synthase family. Requires Mg(2+) as cofactor.

The catalysed reaction is isopentenyl diphosphate + dimethylallyl diphosphate = (2E)-geranyl diphosphate + diphosphate. It carries out the reaction isopentenyl diphosphate + (2E)-geranyl diphosphate = (2E,6E)-farnesyl diphosphate + diphosphate. The enzyme catalyses isopentenyl diphosphate + (2E,6E)-farnesyl diphosphate = (2E,6E,10E)-geranylgeranyl diphosphate + diphosphate. Its function is as follows. Geranylgeranyl pyrophosphate synthase; part of the gene cluster 3 that mediates the biosynthesis of an isoprenoid secondary metabolite. The protein is Geranylgeranyl pyrophosphate synthase 2 (GGS2) of Zymoseptoria tritici (strain CBS 115943 / IPO323) (Speckled leaf blotch fungus).